Consider the following 636-residue polypeptide: Methyl-CpG-binding domain protein 1 (636 aa).

The MBD domain maps to 1-69; the sequence is MAESWQDCPA…TLFDFRQGTL (69 aa). The interval 75–113 is disordered; sequence KTHPLAVPSKKKKKPSKPAKTKKQQVGLQRSEVRIETPQ. The span at 83 to 97 shows a compositional bias: basic residues; the sequence is SKKKKKPSKPAKTKK. The Nuclear localization signal signature appears at 84-88; sequence KKKKK. Residue K117 forms a Glycyl lysine isopeptide (Lys-Gly) (interchain with G-Cter in SUMO2) linkage. 2 CXXC-type zinc fingers span residues 187-234 and 235-281; these read RMFK…RRCL and RIME…RRCF. C194, C197, C200, C206, C209, C212, C228, C233, C243, C246, C249, C255, C258, C261, C275, and C280 together coordinate Zn(2+). Residues 291-314 form a disordered region; it reads GSKVASQRHSQAPPLPPHPASQYT. Residue K293 forms a Glycyl lysine isopeptide (Lys-Gly) (interchain with G-Cter in SUMO2) linkage. A CXXC-type 3 zinc finger spans residues 348 to 396; the sequence is TNQRQNRKCGACAACLRRMDCGRCDFCCDKPKFGGGNQKRQKCRWRQCL. Zn(2+) is bound by residues C356, C359, C362, C368, C371, C374, C390, and C395. Positions 407 to 474 are disordered; it reads AGSGSGEGAG…GRGSVLPQPD (68 aa). S409 carries the post-translational modification Phosphoserine. Residues K443 and K461 each participate in a glycyl lysine isopeptide (Lys-Gly) (interchain with G-Cter in SUMO2) cross-link. Residues K520 and K559 each participate in a glycyl lysine isopeptide (Lys-Gly) (interchain with G-Cter in SUMO2); alternate cross-link. The disordered stretch occupies residues 543–589; that stretch reads QSGFPSKAADPDLSPVKQEPPGPEEDGEEKKDDVSETTPAEEIGGVG. The transcriptional repression domain (TRD) stretch occupies residues 550–612; the sequence is AADPDLSPVK…RLRDAEAWLP (63 aa).

Interacts with OASL, ATF7IP, ATF7IP2 and BAHD1. Binds CHAF1A and the SUV39H1-CBX5 complex via the MBD domain. Binds MGP via the TRD domain. May be part of the MeCP1 complex. During DNA replication, it recruits SETDB1 to form a S phase-specific complex that facilitates methylation of H3 'Lys-9' during replication-coupled chromatin assembly and is at least composed of the CAF-1 subunit CHAF1A, MBD1 and SETDB1. In terms of assembly, interacts with the Ten-1 ICD form of TENM1. Sumoylated, sumoylation may increase interaction with ATF7IP. In terms of tissue distribution, highly expressed in kidney, liver and brain. Detected at lower levels in heart, lung, skeletal muscle, spleen and testis.

The protein localises to the nucleus. It localises to the nucleus matrix. The protein resides in the nucleus speckle. It is found in the chromosome. Functionally, transcriptional repressor that binds CpG islands in promoters where the DNA is methylated at position 5 of cytosine within CpG dinucleotides. Binding is abolished by the presence of 7-mG that is produced by DNA damage by methylmethanesulfonate (MMS). Acts as transcriptional repressor and plays a role in gene silencing by recruiting ATF7IP, which in turn recruits factors such as the histone methyltransferase SETDB1. Probably forms a complex with SETDB1 and ATF7IP that represses transcription and couples DNA methylation and histone 'Lys-9' trimethylation. Isoform 1 can also repress transcription from unmethylated promoters. This chain is Methyl-CpG-binding domain protein 1, found in Mus musculus (Mouse).